The following is a 69-amino-acid chain: U2-agatoxin-Ao1o (69 aa).

An N-terminal signal peptide occupies residues 1-20; that stretch reads MKAIISLLLISAMVFSMFEA. Positions 21–34 are excised as a propeptide; the sequence is VPVRRRFTAFEGER. Cystine bridges form between cysteine 36–cysteine 52, cysteine 43–cysteine 57, and cysteine 51–cysteine 67. Leucine 68 carries the leucine amide modification.

It belongs to the neurotoxin 01 (U2-agtx) family. Expressed by the venom gland.

It is found in the secreted. Functionally, insect active toxin causing rapid but reversible paralysis in crickets. No activity shown in mammals. Does not show effect on mammalian voltage-gated calcium channels. This is U2-agatoxin-Ao1o from Agelena orientalis (Funnel-web spider).